The sequence spans 71 residues: Small ribosomal subunit protein bS21 (71 aa).

Positions 48 to 59 (KAAAAVKRHAKK) are enriched in basic residues. Positions 48–71 (KAAAAVKRHAKKVQRENRKFQRLY) are disordered. Positions 60–71 (VQRENRKFQRLY) are enriched in basic and acidic residues.

This sequence belongs to the bacterial ribosomal protein bS21 family.

The chain is Small ribosomal subunit protein bS21 from Saccharophagus degradans (strain 2-40 / ATCC 43961 / DSM 17024).